The chain runs to 56 residues: Small ribosomal subunit protein uS14 (56 aa).

This sequence belongs to the universal ribosomal protein uS14 family.

The polypeptide is Small ribosomal subunit protein uS14 (RPS29) (Kluyveromyces lactis (strain ATCC 8585 / CBS 2359 / DSM 70799 / NBRC 1267 / NRRL Y-1140 / WM37) (Yeast)).